The following is a 185-amino-acid chain: Ribosome-recycling factor (185 aa).

The protein belongs to the RRF family.

Its subcellular location is the cytoplasm. Responsible for the release of ribosomes from messenger RNA at the termination of protein biosynthesis. May increase the efficiency of translation by recycling ribosomes from one round of translation to another. The chain is Ribosome-recycling factor from Streptococcus pyogenes serotype M18 (strain MGAS8232).